The chain runs to 418 residues: Tryptophan synthase beta chain (418 aa).

Positions 1–18 (MTSTLPKASQPDPSSLQP) are enriched in polar residues. The interval 1 to 28 (MTSTLPKASQPDPSSLQPSARPGAHGRF) is disordered. At Lys-111 the chain carries N6-(pyridoxal phosphate)lysine.

It belongs to the TrpB family. In terms of assembly, tetramer of two alpha and two beta chains. Pyridoxal 5'-phosphate is required as a cofactor.

It carries out the reaction (1S,2R)-1-C-(indol-3-yl)glycerol 3-phosphate + L-serine = D-glyceraldehyde 3-phosphate + L-tryptophan + H2O. It functions in the pathway amino-acid biosynthesis; L-tryptophan biosynthesis; L-tryptophan from chorismate: step 5/5. Functionally, the beta subunit is responsible for the synthesis of L-tryptophan from indole and L-serine. In Synechococcus sp. (strain CC9902), this protein is Tryptophan synthase beta chain.